The primary structure comprises 121 residues: MARIAGINIPPHKHAEIGLTAIFGIGRNRARKICDASGIAYSKKIKDLTDGDLEKIRVQIEQFTIEGDLRRETTMNIKRLMDIGCYRGFRHRRGLPVRGQRTRTNARTRKGPRKGAAALKK.

The disordered stretch occupies residues 94 to 121; the sequence is GLPVRGQRTRTNARTRKGPRKGAAALKK.

It belongs to the universal ribosomal protein uS13 family. In terms of assembly, part of the 30S ribosomal subunit. Forms a loose heterodimer with protein S19. Forms two bridges to the 50S subunit in the 70S ribosome.

Its function is as follows. Located at the top of the head of the 30S subunit, it contacts several helices of the 16S rRNA. In the 70S ribosome it contacts the 23S rRNA (bridge B1a) and protein L5 of the 50S subunit (bridge B1b), connecting the 2 subunits; these bridges are implicated in subunit movement. Contacts the tRNAs in the A and P-sites. The polypeptide is Small ribosomal subunit protein uS13 (Verminephrobacter eiseniae (strain EF01-2)).